The following is a 34-amino-acid chain: Photosystem II reaction center protein Psb30 (34 aa).

The chain crosses the membrane as a helical span at residues 6 to 26 (VIGQLVSTGLIGLLGPAVIIL).

It belongs to the Psb30/Ycf12 family. In terms of assembly, PSII is composed of 1 copy each of membrane proteins PsbA, PsbB, PsbC, PsbD, PsbE, PsbF, PsbH, PsbI, PsbJ, PsbK, PsbL, PsbM, PsbT, PsbX, PsbY, PsbZ, Psb30/Ycf12, peripheral proteins of the oxygen-evolving complex and a large number of cofactors. It forms dimeric complexes.

The protein localises to the plastid. It is found in the chloroplast thylakoid membrane. In terms of biological role, a core subunit of photosystem II (PSII), probably helps stabilize the reaction center. The chain is Photosystem II reaction center protein Psb30 from Skeletonema costatum (Marine centric diatom).